A 757-amino-acid polypeptide reads, in one-letter code: 5-methyltetrahydropteroyltriglutamate--homocysteine methyltransferase (757 aa).

5-methyltetrahydropteroyltri-L-glutamate-binding positions include 17 to 20 and K115; that span reads RELK. Residues 430-432 and E483 contribute to the L-homocysteine site; that span reads IGS. L-methionine-binding positions include 430-432 and E483; that span reads IGS. 5-methyltetrahydropteroyltri-L-glutamate contacts are provided by residues 514 to 515 and W560; that span reads RC. Residue D598 coordinates L-homocysteine. Position 598 (D598) interacts with L-methionine. A 5-methyltetrahydropteroyltri-L-glutamate-binding site is contributed by E604. Residues H640, C642, and E664 each contribute to the Zn(2+) site. The active-site Proton donor is H693. Zn(2+) is bound at residue C725.

It belongs to the vitamin-B12 independent methionine synthase family. Zn(2+) is required as a cofactor.

It carries out the reaction 5-methyltetrahydropteroyltri-L-glutamate + L-homocysteine = tetrahydropteroyltri-L-glutamate + L-methionine. Its pathway is amino-acid biosynthesis; L-methionine biosynthesis via de novo pathway; L-methionine from L-homocysteine (MetE route): step 1/1. Its function is as follows. Catalyzes the transfer of a methyl group from 5-methyltetrahydrofolate to homocysteine resulting in methionine formation. This is 5-methyltetrahydropteroyltriglutamate--homocysteine methyltransferase from Buchnera aphidicola subsp. Schizaphis graminum (strain Sg).